The primary structure comprises 128 residues: Gastrotropin (128 aa).

Alanine 2 carries the N-acetylalanine modification.

Belongs to the calycin superfamily. Fatty-acid binding protein (FABP) family. In terms of tissue distribution, expressed in ileum.

Its subcellular location is the cytoplasm. It is found in the membrane. Its function is as follows. Binds to bile acids and is involved in enterohepatic bile acid metabolism. Required for efficient apical to basolateral transport of conjugated bile acids in ileal enterocytes. Stimulates gastric acid and pepsinogen secretion. This chain is Gastrotropin (FABP6), found in Oryctolagus cuniculus (Rabbit).